A 306-amino-acid polypeptide reads, in one-letter code: Curved DNA-binding protein (306 aa).

The 65-residue stretch at 5–69 (DYYAIMGVKP…QRRAEYDQMW (65 aa)) folds into the J domain.

The protein resides in the cytoplasm. Its subcellular location is the nucleoid. Its function is as follows. DNA-binding protein that preferentially recognizes a curved DNA sequence. It is probably a functional analog of DnaJ; displays overlapping activities with DnaJ, but functions under different conditions, probably acting as a molecular chaperone in an adaptive response to environmental stresses other than heat shock. Lacks autonomous chaperone activity; binds native substrates and targets them for recognition by DnaK. Its activity is inhibited by the binding of CbpM. The chain is Curved DNA-binding protein from Escherichia coli (strain K12 / MC4100 / BW2952).